A 389-amino-acid polypeptide reads, in one-letter code: Probable inactive purple acid phosphatase 29 (389 aa).

Residues M1–A34 form the signal peptide. Residue N80 is glycosylated (N-linked (GlcNAc...) asparagine). N136 is a substrate binding site. Residue N136 coordinates Zn(2+). Residues N191 and N267 are each glycosylated (N-linked (GlcNAc...) asparagine). H303 is a Zn(2+) binding site. H303–H305 lines the substrate pocket. H305 provides a ligand contact to Fe cation. N-linked (GlcNAc...) asparagine glycosylation occurs at N380.

The protein belongs to the metallophosphoesterase superfamily. Purple acid phosphatase family. As to quaternary structure, homodimer. Fe cation is required as a cofactor. The cofactor is Zn(2+). As to expression, expressed in roots, stems, leaves, flowers and siliques.

Its subcellular location is the secreted. The sequence is that of Probable inactive purple acid phosphatase 29 (PAP29) from Arabidopsis thaliana (Mouse-ear cress).